A 76-amino-acid chain; its full sequence is uncharacterized protein (76 aa).

The first 15 residues, 1 to 15 (MYLPLLLFCVISCYG), serve as a signal peptide directing secretion.

This is an uncharacterized protein from Magallana gigas (Pacific oyster).